The sequence spans 74 residues: Probable tetrachloroethene reductive dehalogenase membrane anchor protein (74 aa).

2 helical membrane-spanning segments follow: residues 11–31 (ALGL…ISMG) and 40–60 (AGSI…FLLM).

It belongs to the PceB family.

It localises to the cell inner membrane. May act as a membrane anchor for the tetrachloroethene reductive dehalogenase PceA. In Sulfurospirillum multivorans (Dehalospirillum multivorans), this protein is Probable tetrachloroethene reductive dehalogenase membrane anchor protein.